The sequence spans 198 residues: Iron-sulfur flavoprotein MJ0731 (198 aa).

Residues Cys46, Cys49, Cys52, and Cys59 each contribute to the [4Fe-4S] cluster site.

It belongs to the SsuE family. Isf subfamily. Homodimer. FMN serves as cofactor. The cofactor is [4Fe-4S] cluster.

In terms of biological role, redox-active protein probably involved in electron transport. The polypeptide is Iron-sulfur flavoprotein MJ0731 (Methanocaldococcus jannaschii (strain ATCC 43067 / DSM 2661 / JAL-1 / JCM 10045 / NBRC 100440) (Methanococcus jannaschii)).